Consider the following 556-residue polypeptide: Guanosine-diphosphatase (556 aa).

Topologically, residues 1–12 (MTPTMKSIARRK) are cytoplasmic. A helical; Signal-anchor for type II membrane protein membrane pass occupies residues 13–33 (ALLIALSIFAVTFILWNGFPG). Topologically, residues 34–556 (SSNRPLPSSN…GWNCNVKEEI (523 aa)) are lumenal. E256 (proton acceptor) is an active-site residue. N372 carries an N-linked (GlcNAc...) asparagine glycan.

This sequence belongs to the GDA1/CD39 NTPase family. Ca(2+) is required as a cofactor. The cofactor is Mn(2+).

It is found in the golgi apparatus membrane. It catalyses the reaction GDP + H2O = GMP + phosphate + H(+). It participates in protein modification; protein glycosylation. After transfer of sugars to endogenous macromolecular acceptors, the enzyme converts nucleoside diphosphates to nucleoside monophosphates which in turn exit the Golgi lumen in a coupled antiporter reaction, allowing entry of additional nucleotide sugar from the cytosol. The chain is Guanosine-diphosphatase (gdp1) from Schizosaccharomyces pombe (strain 972 / ATCC 24843) (Fission yeast).